The sequence spans 334 residues: Probable peptidoglycan endopeptidase LytE (334 aa).

The first 25 residues, 1-25 (MKKQIITATTAVVLGSTLFAGAASA), serve as a signal peptide directing secretion. 3 consecutive LysM domains span residues 26-69 (QSIK…TLSI), 86-129 (STYK…VLKL), and 149-192 (STYK…VLKV). Disordered stretches follow at residues 70-89 (NGKS…STYK), 131-153 (GSTS…TYKV), and 195-215 (TSTS…KTSS). Low complexity-rich tracts occupy residues 72 to 87 (KSTS…SSST) and 132 to 153 (STSS…TYKV). The 118-residue stretch at 217 to 334 (SLNVSKLVSD…KPRYLGAKRF (118 aa)) folds into the NlpC/P60 domain. Cys-247 acts as the Nucleophile in catalysis. Residue His-296 is the Proton acceptor of the active site. His-308 is a catalytic residue.

Belongs to the peptidase C40 family.

The protein resides in the secreted. It is found in the cell wall. Cell wall hydrolase that cleaves gamma-D-glutamate-meso-diaminopimelate bonds in peptidoglycan. Seems to play a role in cell separation during vegetative growth. The sequence is that of Probable peptidoglycan endopeptidase LytE (lytE) from Bacillus subtilis (strain 168).